The primary structure comprises 199 residues: Probable thymidylate kinase (199 aa).

13-20 (GIDGAGKT) contacts ATP.

It belongs to the thymidylate kinase family.

It carries out the reaction dTMP + ATP = dTDP + ADP. The sequence is that of Probable thymidylate kinase from Staphylothermus marinus (strain ATCC 43588 / DSM 3639 / JCM 9404 / F1).